A 61-amino-acid polypeptide reads, in one-letter code: Large ribosomal subunit protein eL37 (61 aa).

Zn(2+) is bound by residues C20, C23, C35, and C38. Residues 20–38 (CRRCGRRAYHVRKKRCAAC) form a C4-type zinc finger.

Belongs to the eukaryotic ribosomal protein eL37 family. Zn(2+) serves as cofactor.

Binds to the 23S rRNA. This Methanocaldococcus jannaschii (strain ATCC 43067 / DSM 2661 / JAL-1 / JCM 10045 / NBRC 100440) (Methanococcus jannaschii) protein is Large ribosomal subunit protein eL37 (rpl37e).